Here is a 352-residue protein sequence, read N- to C-terminus: tRNA (guanine-N(1)-)-methyltransferase (352 aa).

S-adenosyl-L-methionine is bound by residues Gly-109 and 129 to 134; that span reads IGDYVL.

Belongs to the RNA methyltransferase TrmD family. Homodimer.

The protein localises to the cytoplasm. It catalyses the reaction guanosine(37) in tRNA + S-adenosyl-L-methionine = N(1)-methylguanosine(37) in tRNA + S-adenosyl-L-homocysteine + H(+). Functionally, specifically methylates guanosine-37 in various tRNAs. The polypeptide is tRNA (guanine-N(1)-)-methyltransferase (Chlamydia trachomatis serovar L2 (strain ATCC VR-902B / DSM 19102 / 434/Bu)).